Here is a 475-residue protein sequence, read N- to C-terminus: Zinc finger protein 296 (475 aa).

The disordered stretch occupies residues 1-78 (MSRRKAGSAP…SPGPMPAGAA (78 aa)). Lys35 is covalently cross-linked (Glycyl lysine isopeptide (Lys-Gly) (interchain with G-Cter in SUMO2)). C2H2-type zinc fingers lie at residues 157-180 (LSCL…QWDH), 231-253 (PTCP…MRSH), and 259-281 (YACD…KKTH). Residues 275–385 (NRHKKTHRQV…KSGGKSRGPG (111 aa)) are disordered. Composition is skewed to low complexity over residues 295–313 (SQEQ…AAAP) and 326–338 (GAAA…EPGA). Over residues 339–351 (PGSGAQAGPGGDT) the composition is skewed to gly residues. The segment covering 354-367 (AITTEQRTDPANSQ) has biased composition (polar residues). C2H2-type zinc fingers lie at residues 386 to 408 (GSCE…RRSH), 414 to 436 (YTCE…RRMH), and 445 to 468 (FECP…RQKH).

Belongs to the krueppel C2H2-type zinc-finger protein family. Interacts with KLF4.

The protein localises to the nucleus. Its function is as follows. May be a transcriptional corepressor with KLF4. The polypeptide is Zinc finger protein 296 (ZNF296) (Homo sapiens (Human)).